Reading from the N-terminus, the 118-residue chain is Small ribosomal subunit protein uS13 (118 aa).

Positions 94–118 (GLPVRGQRTQTNARTRKGPRRLARK) are disordered. Over residues 107 to 118 (RTRKGPRRLARK) the composition is skewed to basic residues.

This sequence belongs to the universal ribosomal protein uS13 family. As to quaternary structure, part of the 30S ribosomal subunit. Forms a loose heterodimer with protein S19. Forms two bridges to the 50S subunit in the 70S ribosome.

Its function is as follows. Located at the top of the head of the 30S subunit, it contacts several helices of the 16S rRNA. In the 70S ribosome it contacts the 23S rRNA (bridge B1a) and protein L5 of the 50S subunit (bridge B1b), connecting the 2 subunits; these bridges are implicated in subunit movement. Contacts the tRNAs in the A and P-sites. The protein is Small ribosomal subunit protein uS13 of Nitrosococcus oceani (strain ATCC 19707 / BCRC 17464 / JCM 30415 / NCIMB 11848 / C-107).